Consider the following 477-residue polypeptide: Ribulose bisphosphate carboxylase large chain (477 aa).

A propeptide spanning residues 1–2 (MS) is cleaved from the precursor. Pro3 bears the N-acetylproline mark. The residue at position 14 (Lys14) is an N6,N6,N6-trimethyllysine. Substrate-binding residues include Asn123 and Thr173. Catalysis depends on Lys175, which acts as the Proton acceptor. Lys177 serves as a coordination point for substrate. Mg(2+)-binding residues include Lys201, Asp203, and Glu204. Lys201 is modified (N6-carboxylysine). His294 (proton acceptor) is an active-site residue. Positions 295, 327, and 379 each coordinate substrate.

This sequence belongs to the RuBisCO large chain family. Type I subfamily. In terms of assembly, heterohexadecamer of 8 large chains and 8 small chains; disulfide-linked. The disulfide link is formed within the large subunit homodimers. It depends on Mg(2+) as a cofactor. The disulfide bond which can form in the large chain dimeric partners within the hexadecamer appears to be associated with oxidative stress and protein turnover.

The protein localises to the plastid. Its subcellular location is the chloroplast. It carries out the reaction 2 (2R)-3-phosphoglycerate + 2 H(+) = D-ribulose 1,5-bisphosphate + CO2 + H2O. The catalysed reaction is D-ribulose 1,5-bisphosphate + O2 = 2-phosphoglycolate + (2R)-3-phosphoglycerate + 2 H(+). In terms of biological role, ruBisCO catalyzes two reactions: the carboxylation of D-ribulose 1,5-bisphosphate, the primary event in carbon dioxide fixation, as well as the oxidative fragmentation of the pentose substrate in the photorespiration process. Both reactions occur simultaneously and in competition at the same active site. This chain is Ribulose bisphosphate carboxylase large chain, found in Nicotiana debneyi (Debney's tobacco).